Reading from the N-terminus, the 490-residue chain is Protein nucleotidyltransferase YdiU (490 aa).

ATP-binding residues include Gly94, Gly96, Arg97, Lys117, Asp129, Gly130, Arg180, and Arg187. The Proton acceptor role is filled by Asp256. Positions 257 and 266 each coordinate Mg(2+). Asp266 is a binding site for ATP.

It belongs to the SELO family. Requires Mg(2+) as cofactor. Mn(2+) is required as a cofactor.

The enzyme catalyses L-seryl-[protein] + ATP = 3-O-(5'-adenylyl)-L-seryl-[protein] + diphosphate. The catalysed reaction is L-threonyl-[protein] + ATP = 3-O-(5'-adenylyl)-L-threonyl-[protein] + diphosphate. It carries out the reaction L-tyrosyl-[protein] + ATP = O-(5'-adenylyl)-L-tyrosyl-[protein] + diphosphate. It catalyses the reaction L-histidyl-[protein] + UTP = N(tele)-(5'-uridylyl)-L-histidyl-[protein] + diphosphate. The enzyme catalyses L-seryl-[protein] + UTP = O-(5'-uridylyl)-L-seryl-[protein] + diphosphate. The catalysed reaction is L-tyrosyl-[protein] + UTP = O-(5'-uridylyl)-L-tyrosyl-[protein] + diphosphate. Nucleotidyltransferase involved in the post-translational modification of proteins. It can catalyze the addition of adenosine monophosphate (AMP) or uridine monophosphate (UMP) to a protein, resulting in modifications known as AMPylation and UMPylation. The sequence is that of Protein nucleotidyltransferase YdiU from Clostridium beijerinckii (strain ATCC 51743 / NCIMB 8052) (Clostridium acetobutylicum).